We begin with the raw amino-acid sequence, 383 residues long: Protein ctg-1 (383 aa).

Positions 73–247 (PPECLEKYCG…YWGGNLVENG (175 aa)) constitute a CRAL-TRIO domain. The 110-residue stretch at 271 to 380 (KKAMADYDQL…AKQLRYNIEI (110 aa)) folds into the GOLD domain.

Highly expressed in cells of the pi uterine cell lineage.

The protein resides in the cytoplasm. Its subcellular location is the cytosol. In terms of biological role, vesicle trafficking protein. Functions in uterine cells to promote basement membrane (BM) mobility and BM gap formation during tissue remodeling. This Caenorhabditis elegans protein is Protein ctg-1.